Reading from the N-terminus, the 198-residue chain is Glycerol-3-phosphate acyltransferase 2 (198 aa).

4 helical membrane passes run 4 to 24 (TYLL…LVVG), 71 to 91 (LPMV…AVLG), 113 to 133 (LLCY…TLLF), and 147 to 167 (VVAV…AMCL).

This sequence belongs to the PlsY family. Probably interacts with PlsX.

It localises to the cell membrane. It catalyses the reaction an acyl phosphate + sn-glycerol 3-phosphate = a 1-acyl-sn-glycero-3-phosphate + phosphate. It participates in lipid metabolism; phospholipid metabolism. Its function is as follows. Catalyzes the transfer of an acyl group from acyl-phosphate (acyl-PO(4)) to glycerol-3-phosphate (G3P) to form lysophosphatidic acid (LPA). This enzyme utilizes acyl-phosphate as fatty acyl donor, but not acyl-CoA or acyl-ACP. The protein is Glycerol-3-phosphate acyltransferase 2 of Bacillus cereus (strain ZK / E33L).